Consider the following 1355-residue polypeptide: Phospholipid-transporting ATPase DRS2 (1355 aa).

Residues 1–15 show a composition bias toward basic and acidic residues; the sequence is MNDDRETPPKRKPGE. Residues 1 to 50 form a disordered region; sequence MNDDRETPPKRKPGEDDTLFDIDFLDDTTSHSGSRSKVTNSHANANYIPP. An involved in autoinhibition region spans residues 1 to 104; sequence MNDDRETPPK…SDAYQPQSLR (104 aa). Residues 1–221 lie on the Cytoplasmic side of the membrane; the sequence is MNDDRETPPK…TFLPKFLFQE (221 aa). The span at 16 to 26 shows a compositional bias: acidic residues; that stretch reads DDTLFDIDFLD. Over residues 30–44 the composition is skewed to polar residues; the sequence is SHSGSRSKVTNSHAN. Phosphoserine is present on Ser-102. Residues 222-242 form a helical membrane-spanning segment; the sequence is FSKYANLFFLCTSAIQQVPHV. Positions 237 to 238 are involved in phosphatidylserine substrate recognition; that stretch reads QQ. Residues 243–246 are Lumenal-facing; sequence SPTN. Residues 247–267 form a helical membrane-spanning segment; the sequence is RYTTIGTLLVVLIVSAMKECI. Residues 268 to 449 are Cytoplasmic-facing; sequence EDIKRANSDK…VEKIINRQII (182 aa). Residues 450–470 traverse the membrane as a helical segment; it reads ALFTVLIVLILISSIGNVIMS. Topologically, residues 471-490 are lumenal; sequence TADAKHLSYLYLEGTNKAGL. A helical membrane pass occupies residues 491–511; it reads FFKDFLTFWILFSNLVPISLF. Over 512–1012 the chain is Cytoplasmic; it reads VTVELIKYYQ…WSYQRISVAI (501 aa). The active-site 4-aspartylphosphate intermediate is the Asp-560. ATP is bound by residues Asp-560, Lys-561, Thr-562, Glu-655, Phe-698, Ser-700, Lys-703, Lys-721, Arg-755, Thr-756, Thr-835, Gly-836, Asp-837, Arg-928, and Lys-934. Asp-560 lines the Mg(2+) pocket. Position 562 (Thr-562) interacts with Mg(2+). Asp-954 provides a ligand contact to Mg(2+). The ATP site is built by Asn-957 and Asp-958. Mg(2+) is bound at residue Asp-958. A helical transmembrane segment spans residues 1013 to 1033; sequence LYSFYKNTALYMTQFWYVFAN. Residues 1034-1043 are Lumenal-facing; sequence AFSGQSIMES. The helical transmembrane segment at 1044 to 1064 threads the bilayer; it reads WTMSFYNLFFTVWPPFVIGVF. At 1065-1094 the chain is on the cytoplasmic side; that stretch reads DQFVSSRLLERYPQLYKLGQKGQFFSVYIF. The chain crosses the membrane as a helical span at residues 1095-1115; that stretch reads WGWIINGFFHSAIVFIGTILI. The Lumenal segment spans residues 1116 to 1131; sequence YRYGFALNMHGELADH. A helical membrane pass occupies residues 1132–1152; sequence WSWGVTVYTTSVIIVLGKAAL. Lys-1149 serves as a coordination point for a 1,2-diacyl-sn-glycero-3-phospho-(1D-myo-inositol 4-phosphate). At 1153–1161 the chain is on the cytoplasmic side; it reads VTNQWTKFT. A helical transmembrane segment spans residues 1162-1182; sequence LIAIPGSLLFWLIFFPIYASI. Residues 1183–1202 lie on the Lumenal side of the membrane; that stretch reads FPHANISREYYGVVKHTYGS. Residues 1203-1223 traverse the membrane as a helical segment; sequence GVFWLTLIVLPIFALVRDFLW. Residues Arg-1219, Trp-1223, Lys-1224, Tyr-1235, and His-1236 each coordinate a 1,2-diacyl-sn-glycero-3-phospho-(1D-myo-inositol 4-phosphate). Topologically, residues 1224-1355 are cytoplasmic; the sequence is KYYKRMYEPE…SSRDDISFDI (132 aa). Positions 1230–1282 are interaction with GEA2; that stretch reads YEPETYHVIQEMQKYNISDSRPHVQQFQNAIRKVRQVQRMKKQRGFAFSQAEE. The tract at residues 1231-1309 is involved in autoinhibition; sequence EPETYHVIQE…KYGELQDASA (79 aa). A disordered region spans residues 1305-1355; it reads QDASANPFNDNNGLGSNDFESAEPFIENPFADGNQNSNRFSSSRDDISFDI. Polar residues predominate over residues 1307–1323; the sequence is ASANPFNDNNGLGSNDF. A compositionally biased stretch (basic and acidic residues) spans 1346–1355; that stretch reads SSRDDISFDI.

This sequence belongs to the cation transport ATPase (P-type) (TC 3.A.3) family. Type IV subfamily. Component of a flippase complex consisting of DRS2 and CDC50. Interacts with CDC50; the interaction is direct, is required for their mutual export from the endoplasmic reticulum, and preferentially occurs when DRS2 is in the E2P state. Interacts (via C-terminus) with GEA2 (via SEC7 domain); the interaction is direct. Interacts with GEA1. The cofactor is Mg(2+).

The protein resides in the golgi apparatus. The protein localises to the trans-Golgi network membrane. It is found in the endosome membrane. It catalyses the reaction ATP + H2O + phospholipidSide 1 = ADP + phosphate + phospholipidSide 2.. The enzyme catalyses a 1,2-diacyl-sn-glycero-3-phospho-L-serine(out) + ATP + H2O = a 1,2-diacyl-sn-glycero-3-phospho-L-serine(in) + ADP + phosphate + H(+). The catalysed reaction is a 1,2-diacyl-sn-glycero-3-phosphoethanolamine(out) + ATP + H2O = a 1,2-diacyl-sn-glycero-3-phosphoethanolamine(in) + ADP + phosphate + H(+). With respect to regulation, allosterically activated by binding 1,2-diacyl-sn-glycero-3-phospho-(1D-myo-inositol 4-phosphate) (phosphatidylinositol 4-phosphate). Inhibited by orthovanadate, N-ethylmaleimide, trifluoroberyllate and tetrafluoroaluminate; orthovanadate and N-ethylmaleimide inhibit phosphorylation of the active site aspartic acid. The ATPase activity is not potently stimulated by phosphatidylinositol 3-phosphate and phosphatidylinositol 5-phosphate, phosphatidylinositol 4,5-bisphosphate or phosphatidylcholine. Not inhibited by azide. Its function is as follows. Catalytic component of a P4-ATPase flippase complex which catalyzes the hydrolysis of ATP coupled to the transport of phosphatidylserine and small amounts of ethanolamine from the lumen to the cytosolic leaflet of the trans-Golgi network and ensures the maintenance of asymmetric distribution of phospholipids. Contributes to clathrin-coated vesicle formation, endocytosis, and protein trafficking between the Golgi and endosomal system. Does not appear to transport phosphatidylcholine or sphingomyelin. In Saccharomyces cerevisiae (strain ATCC 204508 / S288c) (Baker's yeast), this protein is Phospholipid-transporting ATPase DRS2.